The chain runs to 664 residues: Zinc finger protein 710 (664 aa).

Residues Lys110 and Lys113 each participate in a glycyl lysine isopeptide (Lys-Gly) (interchain with G-Cter in SUMO2) cross-link. Residues 121–141 form a disordered region; that stretch reads VYEVSVPGDDKDAGPAEAPAE. C2H2-type zinc fingers lie at residues 295–317, 323–345, and 351–373; these read WQCR…ILGH, HSCP…LLTH, and HKCQ…MLLH. A Glycyl lysine isopeptide (Lys-Gly) (interchain with G-Cter in SUMO2) cross-link involves residue Lys377. C2H2-type zinc fingers lie at residues 379–401, 407–429, 435–457, 463–485, 491–513, 519–541, 547–569, and 575–598; these read YSCH…EVKH, HVCV…LASH, YQCL…MLKH, FVCT…SLTH, FKCE…MLIH, YQCH…MIVH, FKCK…MHLH, and FKCP…KVKH.

The protein belongs to the krueppel C2H2-type zinc-finger protein family.

The protein localises to the nucleus. In terms of biological role, may be involved in transcriptional regulation. The polypeptide is Zinc finger protein 710 (ZNF710) (Homo sapiens (Human)).